The sequence spans 118 residues: uncharacterized protein (118 aa).

This sequence to S.pombe tam6.

It localises to the mitochondrion. This is an uncharacterized protein from Saccharomyces cerevisiae (strain ATCC 204508 / S288c) (Baker's yeast).